A 115-amino-acid chain; its full sequence is Migration and invasion enhancer 1 (115 aa).

Residue Ser2 is modified to N-acetylserine. A disulfide bridge connects residues Cys30 and Cys33. Residue Cys112 is the site of S-geranylgeranyl cysteine attachment. The propeptide at 113–115 is removed in mature form; the sequence is VIL.

It belongs to the SelWTH family. As to quaternary structure, interacts with GPX1. In terms of processing, isoprenylation facilitates association with the plasma membrane and enhances the migratory phenotype of cells by inducing increased filopodia formation. Widely expressed with highest levels in kidney followed by brain and testis.

The protein resides in the cytoplasm. It localises to the cytosol. Its subcellular location is the cell membrane. Its function is as follows. Increases cell migration by inducing filopodia formation at the leading edge of migrating cells. Plays a role in regulation of apoptosis, possibly through control of CASP3. May be involved in a redox-related process. In Mus musculus (Mouse), this protein is Migration and invasion enhancer 1 (Mien1).